We begin with the raw amino-acid sequence, 466 residues long: MIKPRTPPGVLELLPREQIAFQRMLDVIRRNYERFGFLPVETPVFELSDVLLTKSGGETERQVYFVQSTGTLANAAESGATRLPELALRFDLTVPLARYVAEYEHVLAFPFRRYQIQRVYRGERAQRGRFREFYQCDIDVIGKQTLSIRYDAEVLAVIHAVFSELGIGDFQVQLNNRKVLRGFLESQGVRDGELQLAVLREVDKLDKRGVLDVRDTLIGQGFGIPAAQVENILTFVATRSTSHADALARLDALIEDSGPGSHDMLRQGVAELREVLTLVNVLGVPEHAYRLNFSIARGLDYYTGTVYETSLINHPQIGSICSGGRYENLANHYTQSKLPGVGISIGLTRLFWQLRDAGLMDGIAESSVQAMVVLMDEATLDDALDIARCLRIGGINTEVQMEAKKVSKQFQYASRAGIRFVVLAGDDERARGVVAVKDLTREQQFEIPREELASTLQVELEQAKVM.

This sequence belongs to the class-II aminoacyl-tRNA synthetase family. In terms of assembly, homodimer.

It localises to the cytoplasm. The enzyme catalyses tRNA(His) + L-histidine + ATP = L-histidyl-tRNA(His) + AMP + diphosphate + H(+). The protein is Histidine--tRNA ligase of Xylella fastidiosa (strain M12).